Reading from the N-terminus, the 323-residue chain is Aspartate carbamoyltransferase catalytic subunit (323 aa).

Residues Arg-71 and Thr-72 each contribute to the carbamoyl phosphate site. Lys-99 serves as a coordination point for L-aspartate. The carbamoyl phosphate site is built by Arg-121, His-151, and Gln-154. L-aspartate contacts are provided by Arg-184 and Arg-239. Carbamoyl phosphate-binding residues include Gly-280 and Pro-281.

The protein belongs to the aspartate/ornithine carbamoyltransferase superfamily. ATCase family. As to quaternary structure, heterododecamer (2C3:3R2) of six catalytic PyrB chains organized as two trimers (C3), and six regulatory PyrI chains organized as three dimers (R2).

The enzyme catalyses carbamoyl phosphate + L-aspartate = N-carbamoyl-L-aspartate + phosphate + H(+). Its pathway is pyrimidine metabolism; UMP biosynthesis via de novo pathway; (S)-dihydroorotate from bicarbonate: step 2/3. Catalyzes the condensation of carbamoyl phosphate and aspartate to form carbamoyl aspartate and inorganic phosphate, the committed step in the de novo pyrimidine nucleotide biosynthesis pathway. The sequence is that of Aspartate carbamoyltransferase catalytic subunit from Cupriavidus metallidurans (strain ATCC 43123 / DSM 2839 / NBRC 102507 / CH34) (Ralstonia metallidurans).